The chain runs to 1056 residues: Carbamoyl phosphate synthase large chain (1056 aa).

Residues 1 to 397 (MPRRTDIKKV…GFKKALRSID (397 aa)) form a carboxyphosphate synthetic domain region. Residues Arg-127, Arg-167, Gly-173, Gly-174, Glu-206, Val-208, Glu-213, Gly-239, Val-240, His-241, Gln-282, and Glu-294 each contribute to the ATP site. The 193-residue stretch at 131–323 (KALMQKIGEP…IARVAAKIAI (193 aa)) folds into the ATP-grasp 1 domain. Residues Gln-282, Glu-294, and Asn-296 each contribute to the Mg(2+) site. Gln-282, Glu-294, and Asn-296 together coordinate Mn(2+). The tract at residues 398 to 530 (TDINTHTNHN…YSTHGVTTDI (133 aa)) is oligomerization domain. Positions 531–919 (IQNDKKKVLI…YKACISADNE (389 aa)) are carbamoyl phosphate synthetic domain. The region spanning 661–852 (SELLDALKIP…LAKVAAKVMI (192 aa)) is the ATP-grasp 2 domain. ATP-binding residues include Arg-697, Ser-736, Leu-738, Glu-743, Gly-768, Val-769, His-770, Ser-771, Gln-811, and Glu-823. Gln-811, Glu-823, and Asn-825 together coordinate Mg(2+). Residues Gln-811, Glu-823, and Asn-825 each contribute to the Mn(2+) site. The 139-residue stretch at 918 to 1056 (NELPIEGNVF…PISHYLSEVE (139 aa)) folds into the MGS-like domain. Residues 920–1056 (LPIEGNVFIS…PISHYLSEVE (137 aa)) form an allosteric domain region.

This sequence belongs to the CarB family. Composed of two chains; the small (or glutamine) chain promotes the hydrolysis of glutamine to ammonia, which is used by the large (or ammonia) chain to synthesize carbamoyl phosphate. Tetramer of heterodimers (alpha,beta)4. The cofactor is Mg(2+). Mn(2+) serves as cofactor.

The catalysed reaction is hydrogencarbonate + L-glutamine + 2 ATP + H2O = carbamoyl phosphate + L-glutamate + 2 ADP + phosphate + 2 H(+). The enzyme catalyses hydrogencarbonate + NH4(+) + 2 ATP = carbamoyl phosphate + 2 ADP + phosphate + 2 H(+). Its pathway is amino-acid biosynthesis; L-arginine biosynthesis; carbamoyl phosphate from bicarbonate: step 1/1. The protein operates within pyrimidine metabolism; UMP biosynthesis via de novo pathway; (S)-dihydroorotate from bicarbonate: step 1/3. Its function is as follows. Large subunit of the glutamine-dependent carbamoyl phosphate synthetase (CPSase). CPSase catalyzes the formation of carbamoyl phosphate from the ammonia moiety of glutamine, carbonate, and phosphate donated by ATP, constituting the first step of 2 biosynthetic pathways, one leading to arginine and/or urea and the other to pyrimidine nucleotides. The large subunit (synthetase) binds the substrates ammonia (free or transferred from glutamine from the small subunit), hydrogencarbonate and ATP and carries out an ATP-coupled ligase reaction, activating hydrogencarbonate by forming carboxy phosphate which reacts with ammonia to form carbamoyl phosphate. In Methanosphaerula palustris (strain ATCC BAA-1556 / DSM 19958 / E1-9c), this protein is Carbamoyl phosphate synthase large chain.